A 295-amino-acid polypeptide reads, in one-letter code: UDP-N-acetylenolpyruvoylglucosamine reductase (295 aa).

An FAD-binding PCMH-type domain is found at 24–188 (KVGGNAEIFF…LKVVFKINKG (165 aa)). R168 is an active-site residue. S217 serves as the catalytic Proton donor. Residue E287 is part of the active site.

It belongs to the MurB family. Requires FAD as cofactor.

Its subcellular location is the cytoplasm. The catalysed reaction is UDP-N-acetyl-alpha-D-muramate + NADP(+) = UDP-N-acetyl-3-O-(1-carboxyvinyl)-alpha-D-glucosamine + NADPH + H(+). The protein operates within cell wall biogenesis; peptidoglycan biosynthesis. Functionally, cell wall formation. This chain is UDP-N-acetylenolpyruvoylglucosamine reductase, found in Rickettsia peacockii (strain Rustic).